Consider the following 344-residue polypeptide: Dihydroorotate dehydrogenase (quinone) (344 aa).

FMN contacts are provided by residues 65–69 (AGLDK) and T89. K69 contributes to the substrate binding site. 114–118 (NRMGF) lines the substrate pocket. Residues N145 and N178 each contribute to the FMN site. N178 serves as a coordination point for substrate. Residue S181 is the Nucleophile of the active site. N183 serves as a coordination point for substrate. K223 and T251 together coordinate FMN. 252-253 (NT) contacts substrate. Residues G274, G303, and 324–325 (YS) contribute to the FMN site.

Belongs to the dihydroorotate dehydrogenase family. Type 2 subfamily. In terms of assembly, monomer. FMN is required as a cofactor.

It localises to the cell membrane. The catalysed reaction is (S)-dihydroorotate + a quinone = orotate + a quinol. It participates in pyrimidine metabolism; UMP biosynthesis via de novo pathway; orotate from (S)-dihydroorotate (quinone route): step 1/1. Functionally, catalyzes the conversion of dihydroorotate to orotate with quinone as electron acceptor. The chain is Dihydroorotate dehydrogenase (quinone) from Cupriavidus pinatubonensis (strain JMP 134 / LMG 1197) (Cupriavidus necator (strain JMP 134)).